A 112-amino-acid polypeptide reads, in one-letter code: uncharacterized protein (112 aa).

Coiled-coil stretches lie at residues 15–53 and 86–103; these read AEKK…FFKF and LDYE…TERK.

This is an uncharacterized protein from Aquifex aeolicus (strain VF5).